Here is a 418-residue protein sequence, read N- to C-terminus: Peptide chain release factor subunit 1 (418 aa).

This sequence belongs to the eukaryotic release factor 1 family. As to quaternary structure, heterodimer of two subunits, one of which binds GTP.

The protein localises to the cytoplasm. Functionally, directs the termination of nascent peptide synthesis (translation) in response to the termination codons UAA, UAG and UGA. The chain is Peptide chain release factor subunit 1 from Haloarcula marismortui (strain ATCC 43049 / DSM 3752 / JCM 8966 / VKM B-1809) (Halobacterium marismortui).